Here is a 241-residue protein sequence, read N- to C-terminus: tRNA pseudouridine synthase B (241 aa).

D52 functions as the Nucleophile in the catalytic mechanism.

This sequence belongs to the pseudouridine synthase TruB family. Type 1 subfamily.

It carries out the reaction uridine(55) in tRNA = pseudouridine(55) in tRNA. Its function is as follows. Responsible for synthesis of pseudouridine from uracil-55 in the psi GC loop of transfer RNAs. This is tRNA pseudouridine synthase B from Chloroherpeton thalassium (strain ATCC 35110 / GB-78).